Reading from the N-terminus, the 215-residue chain is Protein-L-isoaspartate O-methyltransferase (215 aa).

Residue S62 is part of the active site.

It belongs to the methyltransferase superfamily. L-isoaspartyl/D-aspartyl protein methyltransferase family.

The protein resides in the cytoplasm. It catalyses the reaction [protein]-L-isoaspartate + S-adenosyl-L-methionine = [protein]-L-isoaspartate alpha-methyl ester + S-adenosyl-L-homocysteine. Functionally, catalyzes the methyl esterification of L-isoaspartyl residues in peptides and proteins that result from spontaneous decomposition of normal L-aspartyl and L-asparaginyl residues. It plays a role in the repair and/or degradation of damaged proteins. This is Protein-L-isoaspartate O-methyltransferase from Rhodopseudomonas palustris (strain BisA53).